A 423-amino-acid chain; its full sequence is ATP-citrate synthase alpha chain protein 2 (423 aa).

Residues Asn343, Thr345, and Arg376 each contribute to the citrate site.

Belongs to the succinate/malate CoA ligase beta subunit family. As to quaternary structure, heterooctamer of 4 alpha and 4 beta chains.

The protein localises to the cytoplasm. It localises to the cytosol. It carries out the reaction oxaloacetate + acetyl-CoA + ADP + phosphate = citrate + ATP + CoA. Functionally, ATP citrate-lyase is the primary enzyme responsible for the synthesis of cytosolic acetyl-CoA, used for the elongation of fatty acids and biosynthesis of isoprenoids, flavonoids and malonated derivatives. May supply substrate to the cytosolic acetyl-CoA carboxylase, which generates the malonyl-CoA used for the synthesis of a multitude of compounds, including very long chain fatty acids and flavonoids. In contrast to all known animal ACL enzymes having a homomeric structure, plant ACLs are composed of alpha and beta chains. This chain is ATP-citrate synthase alpha chain protein 2 (ACLA-2), found in Oryza sativa subsp. japonica (Rice).